Consider the following 317-residue polypeptide: Methionyl-tRNA formyltransferase (317 aa).

A (6S)-5,6,7,8-tetrahydrofolate-binding site is contributed by 112 to 115 (SLLP).

Belongs to the Fmt family.

It carries out the reaction L-methionyl-tRNA(fMet) + (6R)-10-formyltetrahydrofolate = N-formyl-L-methionyl-tRNA(fMet) + (6S)-5,6,7,8-tetrahydrofolate + H(+). Attaches a formyl group to the free amino group of methionyl-tRNA(fMet). The formyl group appears to play a dual role in the initiator identity of N-formylmethionyl-tRNA by promoting its recognition by IF2 and preventing the misappropriation of this tRNA by the elongation apparatus. The protein is Methionyl-tRNA formyltransferase of Mesorhizobium japonicum (strain LMG 29417 / CECT 9101 / MAFF 303099) (Mesorhizobium loti (strain MAFF 303099)).